A 284-amino-acid chain; its full sequence is Acetylglutamate kinase (284 aa).

Residues 66–67 (GG), R88, and N179 each bind substrate.

The protein belongs to the acetylglutamate kinase family. ArgB subfamily.

The protein resides in the cytoplasm. It carries out the reaction N-acetyl-L-glutamate + ATP = N-acetyl-L-glutamyl 5-phosphate + ADP. It functions in the pathway amino-acid biosynthesis; L-arginine biosynthesis; N(2)-acetyl-L-ornithine from L-glutamate: step 2/4. In terms of biological role, catalyzes the ATP-dependent phosphorylation of N-acetyl-L-glutamate. This is Acetylglutamate kinase from Actinobacillus pleuropneumoniae serotype 7 (strain AP76).